We begin with the raw amino-acid sequence, 225 residues long: Viral late gene transcription factor 3 (225 aa).

A zinc finger spans residues 7–27 (CSNCKHNGLITESNHEFCIFC).

This sequence belongs to the nucleo-cytoplasmic large DNA viruses (NCLDVs) VLTF-3 family. Interacts with the late transcription elongation factor H5/VLTF-4. Interacts with the late transcription factors VLTF-1.

Acts with RNA polymerase to initiate transcription from late gene promoters. The polypeptide is Viral late gene transcription factor 3 (VLTF3) (Fowlpox virus (strain NVSL) (FPV)).